Reading from the N-terminus, the 484-residue chain is Glutamyl-tRNA(Gln) amidotransferase subunit A (484 aa).

Catalysis depends on charge relay system residues Lys77 and Ser152. Catalysis depends on Ser176, which acts as the Acyl-ester intermediate.

Belongs to the amidase family. GatA subfamily. Heterotrimer of A, B and C subunits.

The catalysed reaction is L-glutamyl-tRNA(Gln) + L-glutamine + ATP + H2O = L-glutaminyl-tRNA(Gln) + L-glutamate + ADP + phosphate + H(+). Functionally, allows the formation of correctly charged Gln-tRNA(Gln) through the transamidation of misacylated Glu-tRNA(Gln) in organisms which lack glutaminyl-tRNA synthetase. The reaction takes place in the presence of glutamine and ATP through an activated gamma-phospho-Glu-tRNA(Gln). The protein is Glutamyl-tRNA(Gln) amidotransferase subunit A of Lacticaseibacillus paracasei (strain ATCC 334 / BCRC 17002 / CCUG 31169 / CIP 107868 / KCTC 3260 / NRRL B-441) (Lactobacillus paracasei).